The primary structure comprises 355 residues: MFAKLDHLEAKYEELNRLISDPVVIQDQERWRGYVKSHAEIGEVVAVYREYKRVAAEMDDARQMLREEQDAELRELAESEVEVLRERSDELRRRLRVLLLPKDPNDEKNVIIEIRAGTGGEEAALFAGDLLRMYLRYAERRGWRAEMLNVNETDLGGIKEAIVLLEGRGAYSELKFESGVHRVQRVPATESGGRIHTSAATVAVLPEAEEVDVEIRPEDLRIDVFCSTGPGGQSVNTTQSAVRVTHLPSGIVVSCQDEKSQHKNRDKAMKVLRARLLDKAQQEQQERIASSRKTQVGTGDRSERIRTYNFPQNRVTDHRLNLTLYRLEEVLQGDLHEFVSALITSDQAEKLKTLD.

Gln-233 is modified (N5-methylglutamine).

It belongs to the prokaryotic/mitochondrial release factor family. Post-translationally, methylated by PrmC. Methylation increases the termination efficiency of RF1.

Its subcellular location is the cytoplasm. Peptide chain release factor 1 directs the termination of translation in response to the peptide chain termination codons UAG and UAA. The sequence is that of Peptide chain release factor 1 from Desulforudis audaxviator (strain MP104C).